A 154-amino-acid polypeptide reads, in one-letter code: MIRLEQILTPGRSLVNVPGGSKKRVLEQIANLVARELPEFDAQTIFENLVAREKLGSTGFGNGIAIPHCRLSGCQSPISAVLHLDAPVDFDALDGAPVDLLFVLLVPEAATEEHLELLRQIAAMLDRADVRDRLRSAPTAEALYQIVVDVQNGQ.

Residues 6-150 (QILTPGRSLV…EALYQIVVDV (145 aa)) enclose the PTS EIIA type-2 domain. Residue H68 is the Tele-phosphohistidine intermediate of the active site.

The protein resides in the cytoplasm. In terms of biological role, seems to have a role in regulating nitrogen assimilation. This is Nitrogen regulatory protein (ptsN) from Pseudomonas aeruginosa (strain ATCC 15692 / DSM 22644 / CIP 104116 / JCM 14847 / LMG 12228 / 1C / PRS 101 / PAO1).